The chain runs to 100 residues: Ferredoxin-2 (100 aa).

The 2Fe-2S ferredoxin-type domain maps to 4 to 97 (YKVTLINEEE…DCTIMTHQES (94 aa)). Residues Cys42, Cys47, Cys50, and Cys81 each coordinate [2Fe-2S] cluster.

Belongs to the 2Fe2S plant-type ferredoxin family. [2Fe-2S] cluster is required as a cofactor.

Functionally, ferredoxins are iron-sulfur proteins that transfer electrons in a wide variety of metabolic reactions. The polypeptide is Ferredoxin-2 (Aphanothece sacrum).